A 206-amino-acid chain; its full sequence is Guanylate kinase (206 aa).

The 179-residue stretch at 5 to 183 folds into the Guanylate kinase-like domain; the sequence is FNLLILSGPS…SKEIILSIAK (179 aa). 12–19 is an ATP binding site; the sequence is GPSGAGKS.

This sequence belongs to the guanylate kinase family.

Its subcellular location is the cytoplasm. It catalyses the reaction GMP + ATP = GDP + ADP. Its function is as follows. Essential for recycling GMP and indirectly, cGMP. The protein is Guanylate kinase (gmk) of Helicobacter pylori (strain J99 / ATCC 700824) (Campylobacter pylori J99).